Reading from the N-terminus, the 305-residue chain is tRNA dimethylallyltransferase (305 aa).

12-19 (GPTASGKT) is an ATP binding site. Residue 14-19 (TASGKT) coordinates substrate. 3 interaction with substrate tRNA regions span residues 37–40 (DSAL), 161–165 (QRLAR), and 242–247 (RCVGYR).

It belongs to the IPP transferase family. Monomer. Mg(2+) serves as cofactor.

The catalysed reaction is adenosine(37) in tRNA + dimethylallyl diphosphate = N(6)-dimethylallyladenosine(37) in tRNA + diphosphate. Functionally, catalyzes the transfer of a dimethylallyl group onto the adenine at position 37 in tRNAs that read codons beginning with uridine, leading to the formation of N6-(dimethylallyl)adenosine (i(6)A). The sequence is that of tRNA dimethylallyltransferase from Psychromonas ingrahamii (strain DSM 17664 / CCUG 51855 / 37).